The sequence spans 119 residues: MSKVNQDIIKRIEEAQLKSDVPAFGPGDTVVVQVRVKEGEKERLQAYEGVVIAKRNRGLHSAFTVRKISSGEGVERTFQTHSPAISSIAVKRRGDVRRAKLYYLRDRSGRSARIKEKLN.

Belongs to the bacterial ribosomal protein bL19 family.

In terms of biological role, this protein is located at the 30S-50S ribosomal subunit interface and may play a role in the structure and function of the aminoacyl-tRNA binding site. The sequence is that of Large ribosomal subunit protein bL19 from Pseudoalteromonas atlantica (strain T6c / ATCC BAA-1087).